The sequence spans 688 residues: Glycine--tRNA ligase beta subunit (688 aa).

The protein belongs to the class-II aminoacyl-tRNA synthetase family. Tetramer of two alpha and two beta subunits.

The protein resides in the cytoplasm. The enzyme catalyses tRNA(Gly) + glycine + ATP = glycyl-tRNA(Gly) + AMP + diphosphate. The sequence is that of Glycine--tRNA ligase beta subunit from Aliivibrio salmonicida (strain LFI1238) (Vibrio salmonicida (strain LFI1238)).